The primary structure comprises 340 residues: GTP 3',8-cyclase (340 aa).

Residues 8-227 (KLGRPIRDLR…TMIEQHFEID (220 aa)) enclose the Radical SAM core domain. Arg17 contributes to the GTP binding site. The [4Fe-4S] cluster site is built by Cys24 and Cys28. Tyr30 serves as a coordination point for S-adenosyl-L-methionine. Residue Cys31 coordinates [4Fe-4S] cluster. Arg71 serves as a coordination point for GTP. Gly75 serves as a coordination point for S-adenosyl-L-methionine. Thr102 serves as a coordination point for GTP. Position 126 (Ser126) interacts with S-adenosyl-L-methionine. A GTP-binding site is contributed by Lys163. S-adenosyl-L-methionine is bound at residue Met197. Cys261 and Cys264 together coordinate [4Fe-4S] cluster. 266–268 (RAR) is a binding site for GTP. Residue Cys278 coordinates [4Fe-4S] cluster.

The protein belongs to the radical SAM superfamily. MoaA family. As to quaternary structure, monomer and homodimer. The cofactor is [4Fe-4S] cluster.

It catalyses the reaction GTP + AH2 + S-adenosyl-L-methionine = (8S)-3',8-cyclo-7,8-dihydroguanosine 5'-triphosphate + 5'-deoxyadenosine + L-methionine + A + H(+). The protein operates within cofactor biosynthesis; molybdopterin biosynthesis. Its function is as follows. Catalyzes the cyclization of GTP to (8S)-3',8-cyclo-7,8-dihydroguanosine 5'-triphosphate. The protein is GTP 3',8-cyclase of Staphylococcus aureus (strain Mu3 / ATCC 700698).